A 357-amino-acid polypeptide reads, in one-letter code: Elongation factor Ts (357 aa).

Residues 82 to 85 form an involved in Mg(2+) ion dislocation from EF-Tu region; the sequence is TDFV.

It belongs to the EF-Ts family.

It localises to the cytoplasm. Its function is as follows. Associates with the EF-Tu.GDP complex and induces the exchange of GDP to GTP. It remains bound to the aminoacyl-tRNA.EF-Tu.GTP complex up to the GTP hydrolysis stage on the ribosome. The chain is Elongation factor Ts from Campylobacter jejuni subsp. doylei (strain ATCC BAA-1458 / RM4099 / 269.97).